Here is a 34-residue protein sequence, read N- to C-terminus: MNNLEVVFQLMALFFVLAAGPAVVVLVASQKGNL.

The helical transmembrane segment at 6 to 26 (VVFQLMALFFVLAAGPAVVVL) threads the bilayer.

It belongs to the Psb30/Ycf12 family. In terms of assembly, PSII is composed of 1 copy each of membrane proteins PsbA, PsbB, PsbC, PsbD, PsbE, PsbF, PsbH, PsbI, PsbJ, PsbK, PsbL, PsbM, PsbT, PsbX, PsbY, PsbZ, Psb30/Ycf12, peripheral proteins of the oxygen-evolving complex and a large number of cofactors. It forms dimeric complexes.

It is found in the plastid. The protein resides in the chloroplast thylakoid membrane. In terms of biological role, a core subunit of photosystem II (PSII), probably helps stabilize the reaction center. The polypeptide is Photosystem II reaction center protein Psb30 (Stigeoclonium helveticum (Green alga)).